The following is a 134-amino-acid chain: MVFTSSESSSLLSSLKMTCSMVSMNSLEQISLIKGVPPFFTHILVSFQEDNWVFGLSAVLRILFFIQRIESLGFTLLDLNTSEISNAMGRSRSPLGMLSLVACSINASNSLGVLTDILFLVLYSLLIHLSKKKS.

Residues 110 to 130 traverse the membrane as a helical segment; that stretch reads SLGVLTDILFLVLYSLLIHLS.

The protein localises to the membrane. This is an uncharacterized protein from Saccharomyces cerevisiae (strain ATCC 204508 / S288c) (Baker's yeast).